The chain runs to 485 residues: Glutamyl-tRNA(Gln) amidotransferase subunit A (485 aa).

Active-site charge relay system residues include lysine 78 and serine 153. Serine 177 functions as the Acyl-ester intermediate in the catalytic mechanism.

The protein belongs to the amidase family. GatA subfamily. Heterotrimer of A, B and C subunits.

It catalyses the reaction L-glutamyl-tRNA(Gln) + L-glutamine + ATP + H2O = L-glutaminyl-tRNA(Gln) + L-glutamate + ADP + phosphate + H(+). Functionally, allows the formation of correctly charged Gln-tRNA(Gln) through the transamidation of misacylated Glu-tRNA(Gln) in organisms which lack glutaminyl-tRNA synthetase. The reaction takes place in the presence of glutamine and ATP through an activated gamma-phospho-Glu-tRNA(Gln). This chain is Glutamyl-tRNA(Gln) amidotransferase subunit A, found in Bacillus mycoides (strain KBAB4) (Bacillus weihenstephanensis).